Reading from the N-terminus, the 1247-residue chain is MRARGWGRLPRRLLLLLVLCVQATRPMGYFELQLSALRNVNGELLSGACCDGDGRTTRAGGCGRDECDTYVRVCLKEYQAKVTPTGPCSYGYGATPVLGGNSFYLPPAGAAGDRARARSRTGGHQDPGLVVIPFQFAWPRSFTLIVEAWDWDNDTTPDEELLIERVSHAGMINPEDRWKSLHFSGHVAHLELQIRVRCDENYYSATCNKFCRPRNDFFGHYTCDQYGNKACMDGWMGKECKEAVCKQGCNLLHGGCTVPGECRCSYGWQGKFCDECVPYPGCVHGSCVEPWHCDCETNWGGLLCDKDLNYCGSHHPCVNGGTCINAEPDQYLCACPDGYLGKNCERAEHACASNPCANGGSCHEVPSGFECHCPSGWNGPTCALDIDECASNPCAAGGTCVDQVDGFECICPEQWVGATCQLDANECEGKPCLNAFSCKNLIGGYYCDCLPGWKGINCQININDCHGQCQHGGTCKDLVNGYQCVCPRGFGGRHCELEYDKCASSPCRRGGICEDLVDGFRCHCPRGLSGLHCEVDMDLCEPSPCLNGARCYNLEGDYYCACPEDFGGKNCSVPRDTCPGGACRVIDGCGFEAGSRARGVAPSGICGPHGHCVSLPGGNFSCICDSGFTGTYCHENIDDCMGQPCRNGGTCIDEVDSFRCFCPSGWEGELCDINPNDCLPDPCHSRGRCYDLVNDFYCACDDGWKGKTCHSREFQCDAYTCSNGGTCYDSGDTFRCACPPGWKGSTCTIAKNSSCVPNPCVNGGTCVGSGDSFSCICRDGWEGRTCTHNTNDCNPLPCYNGGICVDGVNWFRCECAPGFAGPDCRINIDECQSSPCAYGATCVDEINGYRCSCPPGRSGPRCQEVVIFTRPCWSRGMSFPHGSSWMEDCNSCRCLDGHRDCSKVWCGWKPCLLSGQPSDPSAQCPPGQQCQEKAVGQCLQPPCENWGECTAEEPLPPSTPCQPRSSHLDNNCARLTLRFNRDQVPQGTTVGAICSGIRALPATRAAAHDRLLLLLCDRASSGASAVEVAVSFSPARDLPDSSLIQSTAHAIVAAITQRGNSSLLLAVTEVKVETVVMGGSSTGLLVPVLCSVFSVLWLACVVICVWWTRKRRKERERSRLPRDESANNQWAPLNPIRNPIERPGGSGLGTGGHKDILYQCKNFTPPPRRAGEALPGPAGHGAGGEDEEDEELSRGDGDSPEAEKFISHKFTKDPSCSLGRPARWAPGPKVDNRAVRSTKDVRRAGRE.

The N-terminal stretch at 1–23 (MRARGWGRLPRRLLLLLVLCVQA) is a signal peptide. Over 24–1082 (TRPMGYFELQ…ETVVMGGSST (1059 aa)) the chain is Extracellular. Asparagine 153 is a glycosylation site (N-linked (GlcNAc...) asparagine). In terms of domain architecture, DSL spans 196–240 (VRCDENYYSATCNKFCRPRNDFFGHYTCDQYGNKACMDGWMGKEC). 42 cysteine pairs are disulfide-bonded: cysteine 198-cysteine 207, cysteine 211-cysteine 223, cysteine 231-cysteine 240, cysteine 245-cysteine 256, cysteine 249-cysteine 262, cysteine 264-cysteine 273, cysteine 276-cysteine 287, cysteine 282-cysteine 293, cysteine 295-cysteine 304, cysteine 311-cysteine 323, cysteine 317-cysteine 333, cysteine 335-cysteine 344, cysteine 351-cysteine 362, cysteine 356-cysteine 371, cysteine 373-cysteine 382, cysteine 389-cysteine 400, cysteine 394-cysteine 409, cysteine 411-cysteine 420, cysteine 427-cysteine 438, cysteine 432-cysteine 447, cysteine 449-cysteine 458, cysteine 465-cysteine 475, cysteine 469-cysteine 484, cysteine 486-cysteine 495, cysteine 502-cysteine 513, cysteine 507-cysteine 522, cysteine 524-cysteine 533, cysteine 540-cysteine 551, cysteine 545-cysteine 560, cysteine 562-cysteine 571, cysteine 589-cysteine 612, cysteine 606-cysteine 622, cysteine 624-cysteine 633, cysteine 640-cysteine 651, cysteine 645-cysteine 660, cysteine 662-cysteine 671, cysteine 678-cysteine 689, cysteine 683-cysteine 698, cysteine 700-cysteine 709, cysteine 716-cysteine 727, cysteine 721-cysteine 736, and cysteine 738-cysteine 747. In terms of domain architecture, EGF-like 1 spans 241 to 274 (KEAVCKQGCNLLHGGCTVPGECRCSYGWQGKFCD). In terms of domain architecture, EGF-like 2; atypical spans 275–305 (ECVPYPGCVHGSCVEPWHCDCETNWGGLLCD). 2 consecutive EGF-like domains span residues 307–345 (DLNYCGSHHPCVNGGTCINAEPDQYLCACPDGYLGKNCE) and 347–383 (AEHACASNPCANGGSCHEVPSGFECHCPSGWNGPTCA). The EGF-like 5; calcium-binding domain maps to 385–421 (DIDECASNPCAAGGTCVDQVDGFECICPEQWVGATCQ). Positions 423-459 (DANECEGKPCLNAFSCKNLIGGYYCDCLPGWKGINCQ) constitute an EGF-like 6; calcium-binding domain. Residues 461–496 (NINDCHGQCQHGGTCKDLVNGYQCVCPRGFGGRHCE) enclose the EGF-like 7; calcium-binding domain. EGF-like domains are found at residues 498–534 (EYDKCASSPCRRGGICEDLVDGFRCHCPRGLSGLHCE) and 536–572 (DMDLCEPSPCLNGARCYNLEGDYYCACPEDFGGKNCS). Asparagine 570 carries an N-linked (GlcNAc...) asparagine glycan. The EGF-like 10; atypical domain maps to 574-634 (PRDTCPGGAC…DSGFTGTYCH (61 aa)). An N-linked (GlcNAc...) asparagine glycan is attached at asparagine 619. The region spanning 636–672 (NIDDCMGQPCRNGGTCIDEVDSFRCFCPSGWEGELCD) is the EGF-like 11; calcium-binding domain. One can recognise an EGF-like 12; calcium-binding domain in the interval 674-710 (NPNDCLPDPCHSRGRCYDLVNDFYCACDDGWKGKTCH). 2 EGF-like domains span residues 712 to 748 (REFQCDAYTCSNGGTCYDSGDTFRCACPPGWKGSTCT) and 751 to 787 (KNSSCVPNPCVNGGTCVGSGDSFSCICRDGWEGRTCT). An N-linked (GlcNAc...) asparagine glycan is attached at asparagine 752. 9 disulfides stabilise this stretch: cysteine 755-cysteine 766, cysteine 760-cysteine 775, cysteine 777-cysteine 786, cysteine 793-cysteine 804, cysteine 798-cysteine 813, cysteine 815-cysteine 824, cysteine 831-cysteine 842, cysteine 836-cysteine 851, and cysteine 853-cysteine 862. Residues 789-825 (NTNDCNPLPCYNGGICVDGVNWFRCECAPGFAGPDCR) form the EGF-like 15; calcium-binding domain. One can recognise an EGF-like 16; calcium-binding domain in the interval 827–863 (NIDECQSSPCAYGATCVDEINGYRCSCPPGRSGPRCQ). N-linked (GlcNAc...) asparagine glycosylation is present at asparagine 1060. Residues 1083-1103 (GLLVPVLCSVFSVLWLACVVI) form a helical membrane-spanning segment. Residues 1104–1247 (CVWWTRKRRK…TKDVRRAGRE (144 aa)) lie on the Cytoplasmic side of the membrane. 3 stretches are compositionally biased toward basic and acidic residues: residues 1115–1125 (RERSRLPRDES), 1192–1212 (LSRGDGDSPEAEKFISHKFTK), and 1230–1247 (VDNRAVRSTKDVRRAGRE). Disordered stretches follow at residues 1115-1148 (RERSRLPRDESANNQWAPLNPIRNPIERPGGSGL) and 1167-1247 (PRRA…AGRE). The residue at position 1125 (serine 1125) is a Phosphoserine.

Found to be highest in fetal thymus, epidermis, foregut dorsal root ganglia and inner ear. In 2-weeK-old mice, abundant in heart, lung, thymus, skeletal muscle, brain and testis. Expression overlaps partially with Notch1 expression.

The protein localises to the membrane. Its function is as follows. Putative Notch ligand involved in the mediation of Notch signaling. Plays an essential role during limb, craniofacial and thymic development. May be involved in myogenesis and in the development of peripheral and central nervous systems. The sequence is that of Protein jagged-2 (Jag2) from Mus musculus (Mouse).